Consider the following 356-residue polypeptide: MRLPQARLDQVLDRFREVEARMGAATDGAEIVKLSKEHAELRPVAEAVERLAKLSAERAELDVMASDPEMAEMVRDEIQALDEKLPVMERELALMLAPKDKDENASAILEVRAGTGGDEAALFAGDLFRMYQRYAQTQGWRVEIDSISEGEMGGFKEIVASITGDGVFGRLKFESGVHRVQRVPATEAQGRIHTSAATVAVLPEAEDVEIEIKESDLRIDTYRSSGAGGQHVNKTDSAVRITHLPTGVVVTSSEKSQHQNRARAMKNLKARLYDMQREALDSARSEARKSQVGSGDRSERIRTYNFPQGRVTDHRINLTLYNLARIMEGDALDDVINPLIAEDQAERLASLEESFS.

Glutamine 230 is subject to N5-methylglutamine. Basic and acidic residues predominate over residues 279–289 (ALDSARSEARK). The disordered stretch occupies residues 279-299 (ALDSARSEARKSQVGSGDRSE).

Belongs to the prokaryotic/mitochondrial release factor family. In terms of processing, methylated by PrmC. Methylation increases the termination efficiency of RF1.

Its subcellular location is the cytoplasm. Its function is as follows. Peptide chain release factor 1 directs the termination of translation in response to the peptide chain termination codons UAG and UAA. The sequence is that of Peptide chain release factor 1 (prfA) from Caulobacter vibrioides (strain ATCC 19089 / CIP 103742 / CB 15) (Caulobacter crescentus).